The chain runs to 869 residues: Dynamin-3 (869 aa).

A Dynamin-type G domain is found at 28 to 294; that stretch reads LLELPQIAVV…LTNHIRDTLP (267 aa). The tract at residues 38–45 is G1 motif; it reads GGQSAGKS. 38–46 is a binding site for GTP; it reads GGQSAGKSS. The interval 64 to 66 is G2 motif; sequence VTR. Residues 136 to 139 form a G3 motif region; that stretch reads DLPG. Residues 205–208 form a G4 motif region; it reads TKLD. 205 to 211 serves as a coordination point for GTP; the sequence is TKLDLMD. Tyr231 carries the phosphotyrosine modification. Positions 235 to 238 are G5 motif; it reads VNRS. A GTP-binding site is contributed by 236–239; it reads NRSQ. Lys299 bears the N6-acetyllysine mark. Positions 515 to 621 constitute a PH domain; the sequence is QGTNLPPSRQ…ACDSQEDVDS (107 aa). The residue at position 603 (Tyr603) is a Phosphotyrosine. Position 604 is an N6-acetyllysine (Lys604). The region spanning 659 to 750 is the GED domain; it reads VETIRNLVDS…IIGDISTATV (92 aa). A disordered region spans residues 747–869; the sequence is TATVSTPAPP…IRPLESSLLD (123 aa). Residues Ser769 and Ser773 each carry the phosphoserine modification. Composition is skewed to pro residues over residues 797–822 and 832–855; these read PAIP…PPFP and PQVP…PSPT. At Ser853 the chain carries Phosphoserine.

This sequence belongs to the TRAFAC class dynamin-like GTPase superfamily. Dynamin/Fzo/YdjA family.

Its subcellular location is the cytoplasm. It is found in the cytoskeleton. It catalyses the reaction GTP + H2O = GDP + phosphate + H(+). Functionally, microtubule-associated force-producing protein involved in producing microtubule bundles and able to bind and hydrolyze GTP. Most probably involved in vesicular trafficking processes, in particular endocytosis. In Homo sapiens (Human), this protein is Dynamin-3 (DNM3).